Reading from the N-terminus, the 141-residue chain is Hemoglobin subunit alpha (141 aa).

The region spanning 1–141 (VLSSTDKSNV…VSTVLTSKYR (141 aa)) is the Globin domain. A Phosphoserine modification is found at S3. N6-succinyllysine is present on residues K7 and K11. K16 carries the N6-acetyllysine; alternate modification. K16 bears the N6-succinyllysine; alternate mark. Y24 is modified (phosphotyrosine). Position 35 is a phosphoserine (S35). Residue K40 is modified to N6-succinyllysine. O2 is bound at residue H58. H87 contacts heme b. At S102 the chain carries Phosphoserine. Phosphothreonine is present on T108. Residues S124 and S131 each carry the phosphoserine modification. 2 positions are modified to phosphothreonine: T134 and T137. Position 138 is a phosphoserine (S138).

This sequence belongs to the globin family. In terms of assembly, heterotetramer of two alpha chains and two beta chains. In terms of tissue distribution, red blood cells.

Functionally, involved in oxygen transport from the lung to the various peripheral tissues. Hemopressin acts as an antagonist peptide of the cannabinoid receptor CNR1. Hemopressin-binding efficiently blocks cannabinoid receptor CNR1 and subsequent signaling. This chain is Hemoglobin subunit alpha (HBA), found in Pteropus alecto (Black flying fox).